The sequence spans 337 residues: Probable arabinose 5-phosphate isomerase (337 aa).

One can recognise an SIS domain in the interval Val-58–Phe-201. Substrate is bound by residues Gly-92 to Thr-93, His-99, His-105, Lys-131 to Gly-140, Thr-165 to Glu-167, Thr-237, and Asp-290. His-99 serves as a coordination point for Zn(2+). Residues Met-227–Leu-284 enclose the CBS 1 domain. The CBS 2 domain occupies Met-292–Ser-337.

It belongs to the SIS family. GutQ/KpsF subfamily.

It carries out the reaction D-arabinose 5-phosphate = D-ribulose 5-phosphate. Functionally, catalyzes the reversible aldol-ketol isomerization between D-ribulose 5-phosphate (Ru5P) and D-arabinose 5-phosphate (A5P). The sequence is that of Probable arabinose 5-phosphate isomerase from Haemophilus influenzae (strain ATCC 51907 / DSM 11121 / KW20 / Rd).